We begin with the raw amino-acid sequence, 158 residues long: Cyclic pyranopterin monophosphate synthase (158 aa).

Substrate is bound by residues 75–77 and 113–114; these read LCH and ME. Residue D128 is part of the active site.

Belongs to the MoaC family. In terms of assembly, homohexamer; trimer of dimers.

It catalyses the reaction (8S)-3',8-cyclo-7,8-dihydroguanosine 5'-triphosphate = cyclic pyranopterin phosphate + diphosphate. Its pathway is cofactor biosynthesis; molybdopterin biosynthesis. Catalyzes the conversion of (8S)-3',8-cyclo-7,8-dihydroguanosine 5'-triphosphate to cyclic pyranopterin monophosphate (cPMP). This Actinobacillus succinogenes (strain ATCC 55618 / DSM 22257 / CCUG 43843 / 130Z) protein is Cyclic pyranopterin monophosphate synthase.